We begin with the raw amino-acid sequence, 233 residues long: Lipoprotein-releasing system ATP-binding protein LolD (233 aa).

In terms of domain architecture, ABC transporter spans 10-233 (YRLEGVGKEY…AGELYDQHRP (224 aa)). 46 to 53 (GASGSGKS) contacts ATP.

It belongs to the ABC transporter superfamily. Lipoprotein translocase (TC 3.A.1.125) family. As to quaternary structure, the complex is composed of two ATP-binding proteins (LolD) and two transmembrane proteins (LolC and LolE).

The protein localises to the cell inner membrane. Its function is as follows. Part of the ABC transporter complex LolCDE involved in the translocation of mature outer membrane-directed lipoproteins, from the inner membrane to the periplasmic chaperone, LolA. Responsible for the formation of the LolA-lipoprotein complex in an ATP-dependent manner. This Nitratidesulfovibrio vulgaris (strain ATCC 29579 / DSM 644 / CCUG 34227 / NCIMB 8303 / VKM B-1760 / Hildenborough) (Desulfovibrio vulgaris) protein is Lipoprotein-releasing system ATP-binding protein LolD.